Reading from the N-terminus, the 119-residue chain is uncharacterized protein (119 aa).

The stretch at 6 to 36 forms a coiled coil; sequence QAYLDIQGKIAEFRREIKALRVEEKAITANL. The disordered stretch occupies residues 95 to 119; that stretch reads AVTGSSSNVKIRKSAPARNEEDDDG.

This is an uncharacterized protein from Frog virus 3 (isolate Goorha) (FV-3).